The chain runs to 343 residues: Glucan endo-1,3-beta-glucosidase, acidic isoform GI9 (343 aa).

The N-terminal stretch at 1–29 (MTLCIKNGFLAAALVLVGLLICSIQMIGA) is a signal peptide. A Pyrrolidone carboxylic acid modification is found at Q30. E124 acts as the Proton donor in catalysis. E264 functions as the Nucleophile in the catalytic mechanism.

It belongs to the glycosyl hydrolase 17 family.

The protein localises to the secreted. It localises to the extracellular space. The enzyme catalyses Hydrolysis of (1-&gt;3)-beta-D-glucosidic linkages in (1-&gt;3)-beta-D-glucans.. Its function is as follows. Implicated in the defense of plants against pathogens. The protein is Glucan endo-1,3-beta-glucosidase, acidic isoform GI9 (PR2) of Nicotiana tabacum (Common tobacco).